The primary structure comprises 71 residues: uncharacterized protein (71 aa).

The chain crosses the membrane as a helical span at residues 44-66 (LFFLVFRRLFSWFLVLLPSPRFF).

The protein resides in the membrane. This is an uncharacterized protein from Saccharomyces cerevisiae (strain ATCC 204508 / S288c) (Baker's yeast).